The chain runs to 20 residues: Pregnancy-associated glycoprotein 67A (20 aa).

Asn4 and Asn20 each carry an N-linked (GlcNAc...) asparagine glycan.

It belongs to the peptidase A1 family. As to expression, chorionic epithelium (trophectoderm) and placental cotyledons.

The protein localises to the secreted. Its subcellular location is the extracellular space. In Bison bonasus (European bison), this protein is Pregnancy-associated glycoprotein 67A.